Here is a 473-residue protein sequence, read N- to C-terminus: tRNA-2-methylthio-N(6)-dimethylallyladenosine synthase (473 aa).

Positions 3 to 120 constitute an MTTase N-terminal domain; that stretch reads MKLHVKTWGC…LPEMIKEVQE (118 aa). [4Fe-4S] cluster is bound by residues Cys-12, Cys-49, Cys-83, Cys-157, Cys-161, and Cys-164. Residues 143 to 375 form the Radical SAM core domain; it reads KADGATAFVS…QDRIQQQSQG (233 aa). In terms of domain architecture, TRAM spans 378–441; sequence RKMVGSVQRI…TNSIRGKFIR (64 aa).

The protein belongs to the methylthiotransferase family. MiaB subfamily. Monomer. [4Fe-4S] cluster serves as cofactor.

It is found in the cytoplasm. It catalyses the reaction N(6)-dimethylallyladenosine(37) in tRNA + (sulfur carrier)-SH + AH2 + 2 S-adenosyl-L-methionine = 2-methylsulfanyl-N(6)-dimethylallyladenosine(37) in tRNA + (sulfur carrier)-H + 5'-deoxyadenosine + L-methionine + A + S-adenosyl-L-homocysteine + 2 H(+). Catalyzes the methylthiolation of N6-(dimethylallyl)adenosine (i(6)A), leading to the formation of 2-methylthio-N6-(dimethylallyl)adenosine (ms(2)i(6)A) at position 37 in tRNAs that read codons beginning with uridine. This chain is tRNA-2-methylthio-N(6)-dimethylallyladenosine synthase, found in Psychromonas ingrahamii (strain DSM 17664 / CCUG 51855 / 37).